We begin with the raw amino-acid sequence, 325 residues long: 6-hydroxymellein 5-farnesyltransferase cdmH (325 aa).

5 helical membrane passes run 60–80, 113–133, 138–158, 169–189, and 192–212; these read ASILRLAGLCTAHCVLLGAAG, AFTWMAFLYSTSVGMLKAMLG, WPFMVPLTAIILVYPLGKRPI, LLGIAVGYPTMYGWAAVYGPC, and ISEILHRCVPLWIFLFFWSFY. Asn-214 carries N-linked (GlcNAc...) asparagine glycosylation. The next 3 membrane-spanning stretches (helical) occupy residues 243–263, 267–287, and 295–315; these read ALLAILASIALSTIPFVLRPF, WLWLSWVGAWVPGIIQQLLSF, and GGVLHLSTVKLGLWTVFACTL.

The protein belongs to the UbiA prenyltransferase family. Requires Mg(2+) as cofactor.

Its subcellular location is the membrane. It carries out the reaction 6-hydroxymellein + (2E,6E)-farnesyl diphosphate = verruculide C + diphosphate. It functions in the pathway secondary metabolite biosynthesis; terpenoid biosynthesis. Its function is as follows. 6-hydroxymellein 5-farnesyltransferase; part of the gene cluster that mediates the biosynthesis of chrodrimanin B, a meroterpenoid that acts as a potent blocker of insect GABA-gated chloride channels. The first step of the pathway is the biosynthesis of 6-hydroxymellein by the polyketide synthase cdmE. The prenyltransferase cdmH acts as a 6-hydroxymellein 5-farnesyltransferase and produces the hydrophobic metabolite verruculide C. The FAD-dependent monooxygenase cdmI further converts verruculide C into verruculide B. The terpene cyclase cdmG then produced the pentacyclic molecule 3-hydroxypentacecilide A, the backbone structure of chrodrimanin B, via folding the farnesyl moiety of the substrate into the chair-boat conformation. The short-chain dehydrogenase/reductase cdmF functions as the 3-OH dehydrogenase that oxidizes the C-3 hydroxyl group of 3-hydroxypentacecilide A and produces chrodrimanin C, the dehydrogenated product of 3-hydroxypentacecilide A. The cytochrome P450 monooxygenase cdmJ then accepts both 3-hydroxypentacecilide A and chrodrimanin C and functions as a C-7-beta-hydroxylase to produce respectively chrodrimanin H and chrodrimanin F. The dioxygenase cdmA accepts chrodrimanin H to afford chrodrimanin E, which is further transformed to chrodrimanin A by the dioxygenase cdmD. CdmA can also accept chrodrimanin C as substrate to convert it into verruculide A, which is further converted into chrodrimanin T by cdmD. The last step of the biosynthesis is proposed to be performed by the acetyltransferase cdmC which acetylates chrodrimanin A to yield chrodrimanin B. The pathway may also lead to the production of additional shunt products, including chrodrimanins T and U. The polypeptide is 6-hydroxymellein 5-farnesyltransferase cdmH (Talaromyces verruculosus (Penicillium verruculosum)).